A 129-amino-acid chain; its full sequence is Small ribosomal subunit protein uS11 (129 aa).

It belongs to the universal ribosomal protein uS11 family. Part of the 30S ribosomal subunit. Interacts with proteins S7 and S18. Binds to IF-3.

Its function is as follows. Located on the platform of the 30S subunit, it bridges several disparate RNA helices of the 16S rRNA. Forms part of the Shine-Dalgarno cleft in the 70S ribosome. The protein is Small ribosomal subunit protein uS11 of Sphingopyxis alaskensis (strain DSM 13593 / LMG 18877 / RB2256) (Sphingomonas alaskensis).